The primary structure comprises 375 residues: Alcohol dehydrogenase 6 (375 aa).

Ser-23 is subject to Phosphoserine. Positions 47, 69, 99, 102, 105, 113, and 175 each coordinate Zn(2+). NAD(+) contacts are provided by residues 200-205, Asp-224, Lys-229, 293-295, and Arg-370; these read GLGGVG and VGL.

It belongs to the zinc-containing alcohol dehydrogenase family. Class-V subfamily. As to quaternary structure, dimer. Zn(2+) is required as a cofactor.

Its subcellular location is the cytoplasm. It carries out the reaction a primary alcohol + NAD(+) = an aldehyde + NADH + H(+). The catalysed reaction is a secondary alcohol + NAD(+) = a ketone + NADH + H(+). In terms of biological role, alcohol dehydrogenase. Catalyzes the NAD-dependent oxidation of primary alcohols to the corresponding aldehydes. Oxidizes secondary alcohols to the corresponding ketones. The chain is Alcohol dehydrogenase 6 (ADH6) from Pongo abelii (Sumatran orangutan).